The chain runs to 213 residues: uncharacterized protein (213 aa).

Residues 1–11 are compositionally biased toward basic and acidic residues; sequence MFATKDPEFEN. 2 disordered regions span residues 1–21 and 63–98; these read MFATKDPEFENRINTNKSPRN and LRNKAPKNEETKHEEHTPDNHEETDHHEAKQQEQAW. Residues 12–21 are compositionally biased toward polar residues; the sequence is RINTNKSPRN. The segment covering 63–93 has biased composition (basic and acidic residues); the sequence is LRNKAPKNEETKHEEHTPDNHEETDHHEAKQ.

This is an uncharacterized protein from Escherichia coli (strain K12).